The primary structure comprises 474 residues: uncharacterized protein (474 aa).

An N-terminal signal peptide occupies residues 1–23 (MLRRYLTLSFSSLLLLALLFLTG). Cys-24 carries N-palmitoyl cysteine lipidation. The S-diacylglycerol cysteine moiety is linked to residue Cys-24.

Belongs to the MG067/MG068/MG395 family.

It localises to the cell membrane. This is an uncharacterized protein from Mycoplasma genitalium (strain ATCC 33530 / DSM 19775 / NCTC 10195 / G37) (Mycoplasmoides genitalium).